A 592-amino-acid chain; its full sequence is Calnexin (592 aa).

An N-terminal signal peptide occupies residues 1–20 (MEGKWLLCMLLVLGTAIVEA). At 21 to 481 (HDGHDDDVID…QMIEAAEERP (461 aa)) the chain is on the lumenal side. Ser74 and Asp117 together coordinate Ca(2+). Lys137 carries the post-translational modification N6-acetyllysine. A disulfide bridge connects residues Cys160 and Cys194. An alpha-D-glucoside is bound by residues Tyr164, Lys166, Tyr185, and Asp192. Positions 260–345 (GNLLNDMTPP…AEKPEDWDED (86 aa)) are disordered. The span at 274–319 (REIEDPEDRKPEDWDERPKIPDPEAVKPDDWDEDAPAKIPDEEATK) shows a compositional bias: basic and acidic residues. The interval 276–409 (IEDPEDRKPE…RKIPNPDFFE (134 aa)) is p domain (Extended arm). Tandem repeats lie at residues 278–290 (DPEDRKPEDWDER), 295–307 (DPEAVKPDDWDED), 314–326 (DEEATKPEGWLDD), 333–345 (DPDAEKPEDWDED), and 348–358 (GEWEAPQIANP). 4 X approximate repeats stretches follow at residues 278-345 (DPED…WDED) and 348-405 (GEWE…IPNP). The segment covering 323 to 345 (WLDDEPEYVPDPDAEKPEDWDED) has biased composition (acidic residues). Residues 326–359 (DEPEYVPDPDAEKPEDWDEDMDGEWEAPQIANPR) form an interaction with PPIB region. A disulfide bridge connects residues Cys360 and Cys366. 3 tandem repeats follow at residues 367–377 (GVWQRPVIDNP), 381–391 (GKWKPPMIDNP), and 395–405 (GIWKPRKIPNP). Glu425 is an an alpha-D-glucoside binding site. Asp436 contributes to the Ca(2+) binding site. Residues 482–502 (WLWVVYILTVALPVFLVILFC) form a helical membrane-spanning segment. 2 S-palmitoyl cysteine lipidation sites follow: Cys502 and Cys503. Residues 503–592 (CSGKKQTSGM…SPRNRKPRRE (90 aa)) are Cytoplasmic-facing. The tract at residues 503–592 (CSGKKQTSGM…SPRNRKPRRE (90 aa)) is sufficient to mediate interaction with SGIP1. The disordered stretch occupies residues 511-592 (GMEYKKTDAP…SPRNRKPRRE (82 aa)). A compositionally biased stretch (acidic residues) spans 525–547 (KEEEEEKEEEKDKGDEEEEGEEK). A Phosphoserine modification is found at Ser554. Thr562 carries the post-translational modification Phosphothreonine. The residue at position 564 (Ser564) is a Phosphoserine; by MAPK3. The residue at position 583 (Ser583) is a Phosphoserine.

Belongs to the calreticulin family. As to quaternary structure, interacts with MAPK3/ERK1. Interacts with KCNH2. Associates with ribosomes. Interacts with SGIP1; involved in negative regulation of endocytosis. The palmitoylated form interacts with the ribosome-translocon complex component SSR1, promoting efficient folding of glycoproteins. Interacts with SERPINA2P/SERPINA2 and with the S and Z variants of SERPINA1. Interacts with PPIB. Interacts with ZNRF4. Interacts with SMIM22. Interacts with TMX2. Interacts with TMEM35A/NACHO. Interacts with CHRNA7. Interacts with reticulophagy regulators RETREG2 and RETREG3. Interacts with DNM1L; may form part of a larger protein complex at the ER-mitochondrial interface during mitochondrial fission. Interacts with ADAM7. (Microbial infection) Interacts with HBV large envelope protein, isoform L. In terms of assembly, (Microbial infection) Interacts with HBV large envelope protein, isoform M; this association may be essential for isoform M proper secretion. Post-translationally, phosphorylated at Ser-564 by MAPK3/ERK1. Phosphorylation by MAPK3/ERK1 increases its association with ribosomes. Palmitoylation by DHHC6 leads to the preferential localization to the perinuclear rough ER. It mediates the association of calnexin with the ribosome-translocon complex (RTC) which is required for efficient folding of glycosylated proteins. In terms of processing, ubiquitinated, leading to proteasomal degradation. Probably ubiquitinated by ZNRF4.

It is found in the endoplasmic reticulum membrane. Its subcellular location is the mitochondrion membrane. The protein resides in the melanosome membrane. In terms of biological role, calcium-binding protein that interacts with newly synthesized monoglucosylated glycoproteins in the endoplasmic reticulum. It may act in assisting protein assembly and/or in the retention within the ER of unassembled protein subunits. It seems to play a major role in the quality control apparatus of the ER by the retention of incorrectly folded proteins. Associated with partial T-cell antigen receptor complexes that escape the ER of immature thymocytes, it may function as a signaling complex regulating thymocyte maturation. Additionally it may play a role in receptor-mediated endocytosis at the synapse. The sequence is that of Calnexin (CANX) from Homo sapiens (Human).